A 958-amino-acid chain; its full sequence is MTSPFLQRHLGPSETEQHQMLQTLGYQHLDDFIKDVVPDDILDAAPPRNVLPAGCGEAEALADLGTIAAKNLVQRSLIGLGYHGTATPALIQRHVFENPAWYTAYTPYQAEIAQGRLEALLNFQTLISELTGLPIANASLLDEATAAAEAMGLSFGVCRRPEANRFLVDCHVLPQTWAVLQTRAEPLGIELERVDPEQMAFDTRVFGVLLQLPGADGLLWDPTTLIERAHDAGALVTVAIDPLAQTLFAPVADFGADIAVGSAQRFGVPMGFGGPHAAFFATREAYKRQIPGRLVGESKDAEGNPALRLALQTREQHIRRDKATSNICTAQVLLAVIASFYAVHHGPDGLRAIAERLVGLRLQFEAGLRTLDVAVEEADRFDTVTVTTTHAPAVHAAAAEAGFNLRVLPDGVPASQATGFGVSFDEFSDQKEVAHLLEAVARAVGKPVSTAPASAANTALLSLPSRIRPWLTQPAFHRYRSETELMRYIQRLVSRDLSLVHGMIPLGSCTMKLNAAAELLPVSWPEFARLHPFAPLDQALGYRHLADDLERWLAALTGFAAVSLQPNAGSQGEYAGLLVIRAWHRSRGDNHRDICLIPTSAHGTNPASAVMAGLKVVAVACDAEGNIDQDDLAARATEYADRLAALMVTYPSTHGVFETGIRHICEVVHRHGGQVYLDGANLNAQVGLSRPGAFGADVCHLNLHKTFCIPHGGGGPGVGPIGVAAHLAPFLPGHPFENQTASAIGPVSAAALGSASILPISWMYLRMMGADALRQASAVALLSANYLAHRLDDHFPVLFRGATGRVAHECILDLRPLKRDAGIDVDDIAKRLMDYGFHAPTVSWPVAGTVMVEPTESESLSELDRFADALIAIRDEVRAIETGAMDALNNPLKRAPHTMAAVMAEVWDRPYSRQQAAFPLPDQTQNKVWPAVARIDNAFGDRNLICTCPSVEAVAIAA.

At lysine 705 the chain carries N6-(pyridoxal phosphate)lysine.

Belongs to the GcvP family. The glycine cleavage system is composed of four proteins: P, T, L and H. Pyridoxal 5'-phosphate is required as a cofactor.

The enzyme catalyses N(6)-[(R)-lipoyl]-L-lysyl-[glycine-cleavage complex H protein] + glycine + H(+) = N(6)-[(R)-S(8)-aminomethyldihydrolipoyl]-L-lysyl-[glycine-cleavage complex H protein] + CO2. The glycine cleavage system catalyzes the degradation of glycine. The P protein binds the alpha-amino group of glycine through its pyridoxal phosphate cofactor; CO(2) is released and the remaining methylamine moiety is then transferred to the lipoamide cofactor of the H protein. This is Glycine dehydrogenase (decarboxylating) from Synechococcus sp. (strain CC9902).